The primary structure comprises 38 residues: Beta-defensin 8 (38 aa).

3 disulfides stabilise this stretch: Cys7–Cys36, Cys14–Cys29, and Cys19–Cys37.

This sequence belongs to the beta-defensin family. In terms of tissue distribution, neutrophilic granules.

It is found in the secreted. In terms of biological role, has bactericidal activity. Active against E.coli ML35 and S.aureus 502A. The chain is Beta-defensin 8 (DEFB8) from Bos taurus (Bovine).